The chain runs to 225 residues: Ribonuclease 3 (225 aa).

The region spanning 7-129 is the RNase III domain; that stretch reads IPRLCRTLGY…IIGAVYLDSD (123 aa). Glutamate 42 contacts Mg(2+). The active site involves aspartate 46. Residues aspartate 115 and glutamate 118 each contribute to the Mg(2+) site. Glutamate 118 is an active-site residue. The 71-residue stretch at 155–225 folds into the DRBM domain; sequence DPKTLLQELL…AAQALELIKR (71 aa).

The protein belongs to the ribonuclease III family. Homodimer. Mg(2+) is required as a cofactor.

It is found in the cytoplasm. The catalysed reaction is Endonucleolytic cleavage to 5'-phosphomonoester.. Functionally, digests double-stranded RNA. Involved in the processing of primary rRNA transcript to yield the immediate precursors to the large and small rRNAs (23S and 16S). Processes some mRNAs, and tRNAs when they are encoded in the rRNA operon. Processes pre-crRNA and tracrRNA of type II CRISPR loci if present in the organism. This Shewanella woodyi (strain ATCC 51908 / MS32) protein is Ribonuclease 3.